The chain runs to 80 residues: Venom protein HGE029 (80 aa).

Positions 1 to 22 (MNAKAFLAIFMIALLITDRAEA) are cleaved as a signal peptide.

Belongs to the non-disulfide-bridged peptide (NDBP) superfamily. Long chain multifunctional peptide (group 2) family. As to expression, expressed by the venom gland.

Its subcellular location is the secreted. The polypeptide is Venom protein HGE029 (Hoffmannihadrurus gertschi (Scorpion)).